We begin with the raw amino-acid sequence, 209 residues long: Thymidine kinase (209 aa).

ATP contacts are provided by residues 9–16 (AAMNAGKS) and 88–91 (DEAQ). Glutamate 89 acts as the Proton acceptor in catalysis. Residues cysteine 146, cysteine 148, cysteine 183, and histidine 186 each contribute to the Zn(2+) site.

The protein belongs to the thymidine kinase family. In terms of assembly, homotetramer.

The protein resides in the cytoplasm. It carries out the reaction thymidine + ATP = dTMP + ADP + H(+). The protein is Thymidine kinase of Legionella pneumophila (strain Paris).